The primary structure comprises 271 residues: Mannosyl-3-phosphoglycerate phosphatase (271 aa).

Asp-13 (nucleophile) is an active-site residue. Asp-13, Asp-15, and Asp-214 together coordinate Mg(2+).

Belongs to the HAD-like hydrolase superfamily. MPGP family. Requires Mg(2+) as cofactor.

Its subcellular location is the cytoplasm. It catalyses the reaction 2-O-(alpha-D-mannosyl)-3-phosphoglycerate + H2O = (2R)-2-O-(alpha-D-mannosyl)-glycerate + phosphate. In Escherichia coli O45:K1 (strain S88 / ExPEC), this protein is Mannosyl-3-phosphoglycerate phosphatase.